Here is a 291-residue protein sequence, read N- to C-terminus: MIQIFFLGTGAGSPSKKRKLPAFLVRREGVNILLDCGEGTQYTLMNYKLGINSIKIIGISHMHGDHVFGLLGVIASMGLLDRKETLYILGPRKLKDFLYTSFEYSKFNPSFKIEFIDNYNDENITISTFKTCHTIESQGYLIMEKDRVKIDEEKLEKEKIRDWRVIRKLKEGKTVEYNGKLLKPEDYLVIKRGSKVAYTGDTMPCQSVVDSVKGVDILIHDSTFLDEPSAYTYGHSNVTDAAKIALEASVKLLALTHISPRYEDVSEHLKMARRIFPKSILPDDLSYITIK.

7 residues coordinate Zn(2+): His61, His63, Asp65, His66, His133, Asp201, and His257. Asp65 acts as the Proton acceptor in catalysis.

It belongs to the RNase Z family. As to quaternary structure, homodimer. Requires Zn(2+) as cofactor.

The catalysed reaction is Endonucleolytic cleavage of RNA, removing extra 3' nucleotides from tRNA precursor, generating 3' termini of tRNAs. A 3'-hydroxy group is left at the tRNA terminus and a 5'-phosphoryl group is left at the trailer molecule.. Functionally, zinc phosphodiesterase, which displays some tRNA 3'-processing endonuclease activity. Probably involved in tRNA maturation, by removing a 3'-trailer from precursor tRNA. The polypeptide is Ribonuclease Z (Saccharolobus solfataricus (strain ATCC 35092 / DSM 1617 / JCM 11322 / P2) (Sulfolobus solfataricus)).